The sequence spans 262 residues: Acyl-[acyl-carrier-protein]--UDP-N-acetylglucosamine O-acyltransferase (262 aa).

It belongs to the transferase hexapeptide repeat family. LpxA subfamily. In terms of assembly, homotrimer.

Its subcellular location is the cytoplasm. The enzyme catalyses a (3R)-hydroxyacyl-[ACP] + UDP-N-acetyl-alpha-D-glucosamine = a UDP-3-O-[(3R)-3-hydroxyacyl]-N-acetyl-alpha-D-glucosamine + holo-[ACP]. It participates in glycolipid biosynthesis; lipid IV(A) biosynthesis; lipid IV(A) from (3R)-3-hydroxytetradecanoyl-[acyl-carrier-protein] and UDP-N-acetyl-alpha-D-glucosamine: step 1/6. Functionally, involved in the biosynthesis of lipid A, a phosphorylated glycolipid that anchors the lipopolysaccharide to the outer membrane of the cell. This Yersinia enterocolitica serotype O:8 / biotype 1B (strain NCTC 13174 / 8081) protein is Acyl-[acyl-carrier-protein]--UDP-N-acetylglucosamine O-acyltransferase.